The sequence spans 65 residues: Small ribosomal subunit protein bS21 (65 aa).

This sequence belongs to the bacterial ribosomal protein bS21 family.

In Thermodesulfovibrio yellowstonii (strain ATCC 51303 / DSM 11347 / YP87), this protein is Small ribosomal subunit protein bS21.